Here is a 396-residue protein sequence, read N- to C-terminus: Alanine racemase (396 aa).

K46 functions as the Proton acceptor; specific for D-alanine in the catalytic mechanism. The residue at position 46 (K46) is an N6-(pyridoxal phosphate)lysine. A substrate-binding site is contributed by R145. The active-site Proton acceptor; specific for L-alanine is Y280. M328 contributes to the substrate binding site.

This sequence belongs to the alanine racemase family. It depends on pyridoxal 5'-phosphate as a cofactor.

The enzyme catalyses L-alanine = D-alanine. The protein operates within amino-acid biosynthesis; D-alanine biosynthesis; D-alanine from L-alanine: step 1/1. Its function is as follows. Catalyzes the interconversion of L-alanine and D-alanine. May also act on other amino acids. This is Alanine racemase (alr) from Brucella canis (strain ATCC 23365 / NCTC 10854 / RM-666).